The primary structure comprises 218 residues: Adenylate kinase (218 aa).

10 to 15 lines the ATP pocket; it reads GAGKGT. The NMP stretch occupies residues 30-59; it reads STGDMLRAAVKAGTPLGVEAKKIMDAGALV. AMP contacts are provided by residues Thr31, Arg36, 57 to 59, 85 to 88, and Gln92; these read ALV and GFPR. The interval 122 to 159 is LID; sequence GRRSHTASGRTYHVKYNPPKVEGKDDVTGEPLIQREDD. ATP is bound by residues Arg123 and 132–133; that span reads TY. The AMP site is built by Arg156 and Arg167. Residue Gly203 participates in ATP binding.

It belongs to the adenylate kinase family. In terms of assembly, monomer.

Its subcellular location is the cytoplasm. The enzyme catalyses AMP + ATP = 2 ADP. Its pathway is purine metabolism; AMP biosynthesis via salvage pathway; AMP from ADP: step 1/1. Functionally, catalyzes the reversible transfer of the terminal phosphate group between ATP and AMP. Plays an important role in cellular energy homeostasis and in adenine nucleotide metabolism. The sequence is that of Adenylate kinase from Polaromonas sp. (strain JS666 / ATCC BAA-500).